An 874-amino-acid polypeptide reads, in one-letter code: Leucine--tRNA ligase (874 aa).

A 'HIGH' region motif is present at residues 47–57 (PYPSGKLHMGH). Residues 636 to 640 (KMSKS) carry the 'KMSKS' region motif. K639 lines the ATP pocket.

Belongs to the class-I aminoacyl-tRNA synthetase family.

It localises to the cytoplasm. It catalyses the reaction tRNA(Leu) + L-leucine + ATP = L-leucyl-tRNA(Leu) + AMP + diphosphate. This is Leucine--tRNA ligase from Acinetobacter baumannii (strain SDF).